A 247-amino-acid polypeptide reads, in one-letter code: tRNA pseudouridine synthase A (247 aa).

The active-site Nucleophile is Asp-52. Substrate is bound at residue Tyr-111.

The protein belongs to the tRNA pseudouridine synthase TruA family. Homodimer.

The catalysed reaction is uridine(38/39/40) in tRNA = pseudouridine(38/39/40) in tRNA. Formation of pseudouridine at positions 38, 39 and 40 in the anticodon stem and loop of transfer RNAs. This is tRNA pseudouridine synthase A from Erythrobacter litoralis (strain HTCC2594).